We begin with the raw amino-acid sequence, 618 residues long: Proline--tRNA ligase (618 aa).

This sequence belongs to the class-II aminoacyl-tRNA synthetase family. ProS type 1 subfamily. Homodimer.

It is found in the cytoplasm. The catalysed reaction is tRNA(Pro) + L-proline + ATP = L-prolyl-tRNA(Pro) + AMP + diphosphate. Catalyzes the attachment of proline to tRNA(Pro) in a two-step reaction: proline is first activated by ATP to form Pro-AMP and then transferred to the acceptor end of tRNA(Pro). As ProRS can inadvertently accommodate and process non-cognate amino acids such as alanine and cysteine, to avoid such errors it has two additional distinct editing activities against alanine. One activity is designated as 'pretransfer' editing and involves the tRNA(Pro)-independent hydrolysis of activated Ala-AMP. The other activity is designated 'posttransfer' editing and involves deacylation of mischarged Ala-tRNA(Pro). The misacylated Cys-tRNA(Pro) is not edited by ProRS. This chain is Proline--tRNA ligase, found in Streptococcus pyogenes serotype M2 (strain MGAS10270).